Reading from the N-terminus, the 479-residue chain is Bifunctional protein HldE (479 aa).

Residues Met1–Lys319 are ribokinase. An ATP-binding site is contributed by Asn195–Glu198. Asp264 is an active-site residue. The interval Met346–Asn479 is cytidylyltransferase.

This sequence in the N-terminal section; belongs to the carbohydrate kinase PfkB family. It in the C-terminal section; belongs to the cytidylyltransferase family. In terms of assembly, homodimer.

It carries out the reaction D-glycero-beta-D-manno-heptose 7-phosphate + ATP = D-glycero-beta-D-manno-heptose 1,7-bisphosphate + ADP + H(+). It catalyses the reaction D-glycero-beta-D-manno-heptose 1-phosphate + ATP + H(+) = ADP-D-glycero-beta-D-manno-heptose + diphosphate. It functions in the pathway nucleotide-sugar biosynthesis; ADP-L-glycero-beta-D-manno-heptose biosynthesis; ADP-L-glycero-beta-D-manno-heptose from D-glycero-beta-D-manno-heptose 7-phosphate: step 1/4. The protein operates within nucleotide-sugar biosynthesis; ADP-L-glycero-beta-D-manno-heptose biosynthesis; ADP-L-glycero-beta-D-manno-heptose from D-glycero-beta-D-manno-heptose 7-phosphate: step 3/4. Its function is as follows. Catalyzes the phosphorylation of D-glycero-D-manno-heptose 7-phosphate at the C-1 position to selectively form D-glycero-beta-D-manno-heptose-1,7-bisphosphate. Functionally, catalyzes the ADP transfer from ATP to D-glycero-beta-D-manno-heptose 1-phosphate, yielding ADP-D-glycero-beta-D-manno-heptose. The protein is Bifunctional protein HldE of Blochmanniella floridana.